The following is a 306-amino-acid chain: Putative B3 domain-containing protein Os03g0621600 (306 aa).

Positions 29-122 (FSVLCLMPIM…QLKTLIFDSS (94 aa)) form a DNA-binding region, TF-B3 1. A disordered region spans residues 139–166 (YDIAMRNSQDEKKKRKQRDISRQGTVKP). The TF-B3 2 DNA-binding region spans 210–306 (GYVMNNSSIH…VMDVHIIRRK (97 aa)).

It localises to the nucleus. This chain is Putative B3 domain-containing protein Os03g0621600, found in Oryza sativa subsp. japonica (Rice).